The chain runs to 691 residues: Leucine-rich repeat and WD repeat-containing protein 1 (691 aa).

LRR repeat units lie at residues 22-45 (DLKK…LFSQ), 48-69 (NLDE…LGLH), and 70-91 (NLRI…KQFP). The segment at 202 to 291 (GKKRDSADDC…QSNESSAKIN (90 aa)) is disordered. Polar residues-rich tracts occupy residues 255–264 (TSTQGTPSKS) and 276–291 (STPS…AKIN). WD repeat units lie at residues 426-466 (AHKK…CDYN), 476-516 (DTTS…KQGR), 535-574 (NDFH…KTRK), 593-632 (SSET…ADLQ), and 659-691 (VEKT…WKIK).

Belongs to the LRWD1 family. Component of the ORC complex.

It localises to the nucleus. The protein localises to the chromosome. The protein resides in the centromere. Its subcellular location is the telomere. It is found in the cytoplasm. It localises to the cytoskeleton. The protein localises to the microtubule organizing center. The protein resides in the centrosome. Its subcellular location is the kinetochore. In terms of biological role, required for G1/S transition. Recruits and stabilizes the origin recognition complex (ORC) onto chromatin during G1 to establish pre-replication complex (preRC) and to heterochromatic sites in post-replicated cells. Binds a combination of DNA and histone methylation repressive marks on heterochromatin. Required for silencing of major satellite repeats. May be important ORC2, ORC3 and ORC4 stability. In Xenopus tropicalis (Western clawed frog), this protein is Leucine-rich repeat and WD repeat-containing protein 1 (lrwd1).